The following is a 527-amino-acid chain: MINISDIPKNPGCYIYKNESGTVIYVGKAKNLKKRVSSYFNKKNHDPKTEKLVKSIYEMEFIVTDNEVEALILENTLIKKYSPKYNIDLKDSKNYAYIYISEENFPRIGISRNKSKKGKFYGPFTSAKERDYVLDVLKKTFKIRSCKNMHKRPCLRHHIKNCTAPCSGDITSKDYLNQIKKAEHILKGNIDSLIHELKNEMNEKSKNLQFEEALLIREEINAIERLKTRQNVKRDVKYNEDVISILEKSGKLHIMVFNVLKGTLFDRKYFEFDYTENFFEEFLIQYYSENDVPSEIIISELPKNLEEDNNEYSSDALLEYLSKKKGSKVAFKIPKQGEKKQLLDLAIKNLEIYVNGNEIKVQSLKNKLMLDKSPNIIECFDISHLSGTSTVGSVVQFRNGKPDKKNYRRFKIKTVSGIDDFKSISEVVFRRYSKLLEENLELPDLIIIDGGKGQLSSAFSELRKLKLKIPLISIAKREEEIYTPGIENPLPIKKNEKASLFIQEIRDEAHRFAINYNRLLRKKELIK.

The GIY-YIG domain occupies 9-87 (KNPGCYIYKN…IKKYSPKYNI (79 aa)). One can recognise a UVR domain in the interval 191–226 (DSLIHELKNEMNEKSKNLQFEEALLIREEINAIERL).

It belongs to the UvrC family. As to quaternary structure, interacts with UvrB in an incision complex.

Its subcellular location is the cytoplasm. Functionally, the UvrABC repair system catalyzes the recognition and processing of DNA lesions. UvrC both incises the 5' and 3' sides of the lesion. The N-terminal half is responsible for the 3' incision and the C-terminal half is responsible for the 5' incision. This Methanococcus maripaludis (strain DSM 14266 / JCM 13030 / NBRC 101832 / S2 / LL) protein is UvrABC system protein C.